We begin with the raw amino-acid sequence, 465 residues long: UDP-N-acetylmuramate--L-alanine ligase (465 aa).

Residue 112 to 118 (GTHGKTT) coordinates ATP.

Belongs to the MurCDEF family.

The protein resides in the cytoplasm. The enzyme catalyses UDP-N-acetyl-alpha-D-muramate + L-alanine + ATP = UDP-N-acetyl-alpha-D-muramoyl-L-alanine + ADP + phosphate + H(+). It functions in the pathway cell wall biogenesis; peptidoglycan biosynthesis. Cell wall formation. The polypeptide is UDP-N-acetylmuramate--L-alanine ligase (Burkholderia cenocepacia (strain HI2424)).